Here is a 473-residue protein sequence, read N- to C-terminus: MSSESSQGLVTRLALIAAIGGLLFGYDSAVIAAIGTPVDIHFIAPRHLSATAAASLSGMVVVAVLVGCVTGSLLSGWIGIRFGRRGGLLMSSICFVAAGFGAALTEKLFGTGGSALQIFCFFRFLAGLGIGVVSTLTPTYIAEIAPPDKRGQMVSGQQMAIVTGALTGYIFTWLLAHFGSIDWVNASGWCWSPASEGLIGIAFLLLLLTAPDTPHWLVMKGRHSEASKILARLEPQADPNLTIQKIKAGFDKAMDKSSAGLFAFGITVVFAGVSVAAFQQLVGINAVLYYAPQMFQNLGFGADTALLQTISIGVVNFIFTMIASRVVDRFGRKPLLIWGALGMAAMMAVLGCCFWFKVGGVLPLASVLLYIAVFGMSWGPVCWVVLSEMFPSSIKGAAMPIAVTGQWLANILVNFLFKVADGSPALNQTFNHGFSYLVFAALSILGGLIVARFVPETKGRSLDEIEEMWRSQK.

The Cytoplasmic portion of the chain corresponds to 1 to 13 (MSSESSQGLVTRL). The chain crosses the membrane as a helical span at residues 14 to 34 (ALIAAIGGLLFGYDSAVIAAI). At 35 to 59 (GTPVDIHFIAPRHLSATAAASLSGM) the chain is on the periplasmic side. The chain crosses the membrane as a helical span at residues 60 to 80 (VVVAVLVGCVTGSLLSGWIGI). At 81 to 85 (RFGRR) the chain is on the cytoplasmic side. A helical transmembrane segment spans residues 86-106 (GGLLMSSICFVAAGFGAALTE). The Periplasmic portion of the chain corresponds to 107–112 (KLFGTG). Residues 113 to 133 (GSALQIFCFFRFLAGLGIGVV) traverse the membrane as a helical segment. Residues 134–158 (STLTPTYIAEIAPPDKRGQMVSGQQ) lie on the Cytoplasmic side of the membrane. The helical transmembrane segment at 159 to 179 (MAIVTGALTGYIFTWLLAHFG) threads the bilayer. The Periplasmic portion of the chain corresponds to 180 to 187 (SIDWVNAS). Residues 188–208 (GWCWSPASEGLIGIAFLLLLL) form a helical membrane-spanning segment. The Cytoplasmic portion of the chain corresponds to 209–257 (TAPDTPHWLVMKGRHSEASKILARLEPQADPNLTIQKIKAGFDKAMDKS). The helical transmembrane segment at 258–278 (SAGLFAFGITVVFAGVSVAAF) threads the bilayer. Topologically, residues 279 to 303 (QQLVGINAVLYYAPQMFQNLGFGAD) are periplasmic. A helical membrane pass occupies residues 304-324 (TALLQTISIGVVNFIFTMIAS). The Cytoplasmic portion of the chain corresponds to 325 to 335 (RVVDRFGRKPL). Residues 336–356 (LIWGALGMAAMMAVLGCCFWF) traverse the membrane as a helical segment. Residues 357 to 366 (KVGGVLPLAS) are Periplasmic-facing. Residues 367–387 (VLLYIAVFGMSWGPVCWVVLS) form a helical membrane-spanning segment. Residues 388–396 (EMFPSSIKG) are Cytoplasmic-facing. Residues 397 to 417 (AAMPIAVTGQWLANILVNFLF) form a helical membrane-spanning segment. The Periplasmic portion of the chain corresponds to 418 to 429 (KVADGSPALNQT). The chain crosses the membrane as a helical span at residues 430 to 450 (FNHGFSYLVFAALSILGGLIV). Residues 451-473 (ARFVPETKGRSLDEIEEMWRSQK) are Cytoplasmic-facing.

This sequence belongs to the major facilitator superfamily. Sugar transporter (TC 2.A.1.1) family.

It is found in the cell inner membrane. Functionally, allows uptake of glucose by the cell; allows growth on glucose minimal medium by E.coli cells impaired in glucose transport. Also transports fructose, but has a strong preference for glucose. The sequence is that of Glucose facilitated diffusion protein from Zymomonas mobilis subsp. mobilis (strain ATCC 31821 / ZM4 / CP4).